We begin with the raw amino-acid sequence, 181 residues long: Thioredoxin M-type, chloroplastic (181 aa).

The transit peptide at Met-1–Cys-67 directs the protein to the chloroplast. Residues Lys-68 to Ser-180 enclose the Thioredoxin domain. Active-site nucleophile residues include Cys-104 and Cys-107. The cysteines at positions 104 and 107 are disulfide-linked.

This sequence belongs to the thioredoxin family. Plant M-type subfamily. As to quaternary structure, forms a complex with heterodimeric ferredoxin-thioredoxin reductase (FTR) and ferredoxin.

The protein localises to the plastid. It localises to the chloroplast. In terms of biological role, participates in various redox reactions through the reversible oxidation of the active center dithiol to a disulfide. The M form is known to activate NADP-malate dehydrogenase. This is Thioredoxin M-type, chloroplastic from Spinacia oleracea (Spinach).